The sequence spans 251 residues: Eukaryotic translation initiation factor 3 subunit K (251 aa).

One can recognise a PCI domain in the interval 46 to 224 (FDCYANLALL…VKVPTNKENE (179 aa)).

This sequence belongs to the eIF-3 subunit K family. As to quaternary structure, component of the eukaryotic translation initiation factor 3 (eIF-3) complex.

It localises to the cytoplasm. Functionally, component of the eukaryotic translation initiation factor 3 (eIF-3) complex, which is involved in protein synthesis of a specialized repertoire of mRNAs and, together with other initiation factors, stimulates binding of mRNA and methionyl-tRNAi to the 40S ribosome. The eIF-3 complex specifically targets and initiates translation of a subset of mRNAs involved in cell proliferation. This is Eukaryotic translation initiation factor 3 subunit K from Aspergillus oryzae (strain ATCC 42149 / RIB 40) (Yellow koji mold).